A 444-amino-acid chain; its full sequence is MVSKSAALVSLGCAKNLVDSESMVSQLIELGYEMTPEVSQAALILVNTCGFLESAVRESIDTVLQLAGYKASGSCEKLVVAGCMVQRYGKKLLGLLPEVDLFLGTSHCHALKSFIRDHEAGSSERLRIAFPDHVDNGADRHLVEGRSSAYVKIAEGCGNRCAFCLIPRLRGPYRSRRAVDILREAHRLVACGAKELNIVAQDTTAFGSDRGEEHALVSLLESLEEIEKLEWVRLLYAYPDRITPELIRTMSQSRKVVPYLDIPLQHCVPRILASMGRSGTDPERIVDAIRSGIPGVALRTSLIVGFPGETEADFQALTAFVECTGFEHLGVFAFSPEPGTRAARMPDRVPPDVAQERRKVLLELQRGISRRRLESLVGRVLPVLVEGFHPETDLLLTGRLAVQAPEADGTVLITDGIGTPGEIMRCRVTAAHDYDVEAELLSAS.

The 117-residue stretch at 4–120 (KSAALVSLGC…LKSFIRDHEA (117 aa)) folds into the MTTase N-terminal domain. [4Fe-4S] cluster contacts are provided by C13, C49, C83, C157, C161, and C164. The region spanning 143–371 (VEGRSSAYVK…LELQRGISRR (229 aa)) is the Radical SAM core domain. The 69-residue stretch at 374 to 442 (ESLVGRVLPV…DYDVEAELLS (69 aa)) folds into the TRAM domain.

Belongs to the methylthiotransferase family. RimO subfamily. It depends on [4Fe-4S] cluster as a cofactor.

The protein localises to the cytoplasm. The enzyme catalyses L-aspartate(89)-[ribosomal protein uS12]-hydrogen + (sulfur carrier)-SH + AH2 + 2 S-adenosyl-L-methionine = 3-methylsulfanyl-L-aspartate(89)-[ribosomal protein uS12]-hydrogen + (sulfur carrier)-H + 5'-deoxyadenosine + L-methionine + A + S-adenosyl-L-homocysteine + 2 H(+). Functionally, catalyzes the methylthiolation of an aspartic acid residue of ribosomal protein uS12. This chain is Ribosomal protein uS12 methylthiotransferase RimO, found in Syntrophobacter fumaroxidans (strain DSM 10017 / MPOB).